The following is a 314-amino-acid chain: tRNA pseudouridine synthase B (314 aa).

Position 43 (His-43) interacts with substrate. The active-site Nucleophile is the Asp-48. Substrate contacts are provided by Tyr-76, Tyr-179, and Leu-200.

This sequence belongs to the pseudouridine synthase TruB family. Type 1 subfamily.

The catalysed reaction is uridine(55) in tRNA = pseudouridine(55) in tRNA. Responsible for synthesis of pseudouridine from uracil-55 in the psi GC loop of transfer RNAs. This chain is tRNA pseudouridine synthase B, found in Salmonella paratyphi B (strain ATCC BAA-1250 / SPB7).